Here is a 110-residue protein sequence, read N- to C-terminus: Ribonuclease H2 subunit C (110 aa).

The tract at residues 45 to 69 (LKREKSATPSSSDNTTSNTFSNGAI) is disordered. The span at 51-66 (ATPSSSDNTTSNTFSN) shows a compositional bias: low complexity.

The protein belongs to the RNase H2 subunit C family. Highly divergent. The RNase 2 complex is a heterotrimer composed of the catalytic subunit RNH201 and of the non-catalytic subunits RNH202 and RNH203.

It localises to the cytoplasm. The protein localises to the nucleus. Non catalytic subunit of RNase H2, an endonuclease that specifically degrades the RNA of RNA:DNA hybrids. Participates in DNA replication, possibly by mediating the removal of lagging-strand Okazaki fragment RNA primers during DNA replication. Mediates the excision of single ribonucleotides from DNA:RNA duplexes. This is Ribonuclease H2 subunit C (RNH203) from Saccharomyces cerevisiae (strain ATCC 204508 / S288c) (Baker's yeast).